Reading from the N-terminus, the 183-residue chain is MVQAWYMDSDTTTDQREEHQLDPPVPVSIDEVRDKSGVLYWKLNADTYEQDGELEKIRKDRGYSYTDVIEISRDKLPNYEDKIKTFFQEHLHSDEEIRFILAGSGYFDVRDCEDKWIRIQVTRGDLLVLPAGIYHRFTLDKQNYIKAMRLFVGEPVWTPINRPADEHPARFQYIESLRQGIMV.

A disordered region spans residues 1–21 (MVQAWYMDSDTTTDQREEHQL). The Fe(2+) site is built by H90, H92, E96, and H135. Residues H90, H92, E96, and H135 each coordinate Ni(2+).

This sequence belongs to the acireductone dioxygenase (ARD) family. Fe(2+) is required as a cofactor. Ni(2+) serves as cofactor.

The protein resides in the cytoplasm. Its subcellular location is the nucleus. It carries out the reaction 1,2-dihydroxy-5-(methylsulfanyl)pent-1-en-3-one + O2 = 4-methylsulfanyl-2-oxobutanoate + formate + 2 H(+). It catalyses the reaction 1,2-dihydroxy-5-(methylsulfanyl)pent-1-en-3-one + O2 = 3-(methylsulfanyl)propanoate + CO + formate + 2 H(+). The protein operates within amino-acid biosynthesis; L-methionine biosynthesis via salvage pathway; L-methionine from S-methyl-5-thio-alpha-D-ribose 1-phosphate: step 5/6. Its function is as follows. Catalyzes 2 different reactions between oxygen and the acireductone 1,2-dihydroxy-3-keto-5-methylthiopentene (DHK-MTPene) depending upon the metal bound in the active site. Fe-containing acireductone dioxygenase (Fe-ARD) produces formate and 2-keto-4-methylthiobutyrate (KMTB), the alpha-ketoacid precursor of methionine in the methionine recycle pathway. Ni-containing acireductone dioxygenase (Ni-ARD) produces methylthiopropionate, carbon monoxide and formate, and does not lie on the methionine recycle pathway. This is Acireductone dioxygenase from Ixodes scapularis (Black-legged tick).